The primary structure comprises 342 residues: Dual-specificity RNA methyltransferase RlmN (342 aa).

The Proton acceptor role is filled by Glu92. One can recognise a Radical SAM core domain in the interval 98–329 (DLPRSTLCVS…THVRRSRGGE (232 aa)). A disulfide bridge connects residues Cys105 and Cys334. Positions 112, 116, and 119 each coordinate [4Fe-4S] cluster. Residues 161-162 (GE), Ser193, 215-217 (SLH), and Asn291 each bind S-adenosyl-L-methionine. The S-methylcysteine intermediate role is filled by Cys334.

The protein belongs to the radical SAM superfamily. RlmN family. The cofactor is [4Fe-4S] cluster.

The protein resides in the cytoplasm. The catalysed reaction is adenosine(2503) in 23S rRNA + 2 reduced [2Fe-2S]-[ferredoxin] + 2 S-adenosyl-L-methionine = 2-methyladenosine(2503) in 23S rRNA + 5'-deoxyadenosine + L-methionine + 2 oxidized [2Fe-2S]-[ferredoxin] + S-adenosyl-L-homocysteine. The enzyme catalyses adenosine(37) in tRNA + 2 reduced [2Fe-2S]-[ferredoxin] + 2 S-adenosyl-L-methionine = 2-methyladenosine(37) in tRNA + 5'-deoxyadenosine + L-methionine + 2 oxidized [2Fe-2S]-[ferredoxin] + S-adenosyl-L-homocysteine. Functionally, specifically methylates position 2 of adenine 2503 in 23S rRNA and position 2 of adenine 37 in tRNAs. m2A2503 modification seems to play a crucial role in the proofreading step occurring at the peptidyl transferase center and thus would serve to optimize ribosomal fidelity. This chain is Dual-specificity RNA methyltransferase RlmN, found in Syntrophobacter fumaroxidans (strain DSM 10017 / MPOB).